Here is a 275-residue protein sequence, read N- to C-terminus: Axoneme-associated protein mst101(3) (275 aa).

A run of 12 repeats spans residues 64 to 79 (KKKC…EAAE), 80 to 95 (KKKC…EAAE), 96 to 111 (KKKC…EAAQ), 112 to 127 (KKKC…EAAE), 128 to 143 (KKKC…EAAE), 144 to 159 (RKKC…CEEA), 160 to 175 (AKKK…LQQK), 181 to 196 (KKEK…EEAA), 197 to 212 (KKKA…AEEV), 215 to 230 (KKKA…CAEA), 231 to 246 (KKKA…CEEA), and 249 to 264 (KKMC…CAEA). Positions 64-264 (KKKCAEAAKK…AALQKKCAEA (201 aa)) are 12 X 16 AA tandem repeats of [KRA]-K-[KEM]-[CKA]-[AEKD]-[EA]-[ALE]-[AMK]-[FKAML]-[KQA]-[EQKA]-[KQCEM]-[ECLA]-[AEQ]-[AEQ]-[EQAKV].

Testis.

The protein resides in the cytoplasm. Functionally, possible structural role in the sperm tail. The chain is Axoneme-associated protein mst101(3) (mst101(3)) from Drosophila hydei (Fruit fly).